Consider the following 1447-residue polypeptide: Adhesion G protein-coupled receptor L3 (1447 aa).

The N-terminal stretch at 1-19 (MWPSQLLIFMMLLAPIIHA) is a signal peptide. Residues 20-862 (FSRAPIPMAV…VKHSDAVHDL (843 aa)) lie on the Extracellular side of the membrane. Residues 35–124 (SCESYPIELR…KYLEVQYECV (90 aa)) form the SUEL-type lectin domain. Disulfide bonds link Cys36-Cys66, Cys45-Cys123, Cys78-Cys110, Cys91-Cys97, and Cys135-Cys317. N-linked (GlcNAc...) asparagine glycosylation is present at Asn93. Residues 134–393 (LCPGLLKGVY…VVKYSLDFGP (260 aa)) enclose the Olfactomedin-like domain. Positions 249 to 279 (YHDTSPYRWGGKSDIDLAVDENGLWVIYATE) are interaction with FLRT3. Asp264, Asn312, Ala313, and Val367 together coordinate Ca(2+). The segment at 426-473 (DISTTGPLGMGSTTTSTTLRTTTLSPGRSTTPSVSGRRNRSTSTPSPA) is disordered. Residues 428–458 (STTGPLGMGSTTTSTTLRTTTLSPGRSTTPS) show a composition bias toward low complexity. Asn464, Asn549, Asn746, Asn759, Asn804, and Asn830 each carry an N-linked (GlcNAc...) asparagine glycan. The GAIN-B domain maps to 675-854 (DIVRENTDNI…AVLMAHVEVK (180 aa)). 2 disulfides stabilise this stretch: Cys805–Cys836 and Cys824–Cys838. Positions 805-854 (CSFWSYSKRTMTGYWSTQGCRLLTTNKTHTTCSCNHLTNFAVLMAHVEVK) are GPS. The segment at 842–855 (TNFAVLMAHVEVKH) is stachel. Residues 863-888 (LLDVITWVGILLSLVCLLICIFTFCF) form a helical membrane-spanning segment. Residues 889 to 896 (FRGLQSDR) lie on the Cytoplasmic side of the membrane. A helical membrane pass occupies residues 897 to 918 (NTIHKNLCISLFVAELLFLIGI). Topologically, residues 919-926 (NRTDQPIA) are extracellular. A helical transmembrane segment spans residues 927 to 950 (CAVFAALLHFFFLAAFTWMFLEGV). An intrachain disulfide couples Cys927 to Cys999. The Cytoplasmic segment spans residues 951–967 (QLYIMLVEVFESEHSRR). Residues 968-990 (KYFYLVGYGMPALIVAVSAAVDY) form a helical membrane-spanning segment. Topologically, residues 991–1005 (RSYGTDKVCWLRLDT) are extracellular. The chain crosses the membrane as a helical span at residues 1006-1027 (YFIWSFIGPATLIIMLNVIFLG). The Cytoplasmic segment spans residues 1028-1053 (IALYKMFHHTAILKPESGCLDNIKSW). A helical membrane pass occupies residues 1054–1073 (VIGAIALLCLLGLTWAFGLM). The Extracellular segment spans residues 1074–1078 (YINES). Asn1076 carries an N-linked (GlcNAc...) asparagine glycan. The helical transmembrane segment at 1079–1104 (TVIMAYLFTIFNSLQGMFIFIFHCVL) threads the bilayer. Residues 1105-1447 (QKKVRKEYGK…KGPAHLVTSL (343 aa)) lie on the Cytoplasmic side of the membrane. The segment at 1123–1147 (GKSTESSIGSGKTSGSRTPGRYSTG) is disordered. Ser1164 is modified (phosphoserine). Residues 1423-1447 (IVPPNKDGTPPEGSSKGPAHLVTSL) are disordered. The short motif at 1442-1447 (HLVTSL) is the PDZ-binding element.

This sequence belongs to the G-protein coupled receptor 2 family. LN-TM7 subfamily. Heterodimer of 2 chains generated by proteolytic processing; the large extracellular N-terminal fragment and the membrane-bound C-terminal fragment predominantly remain associated and non-covalently linked. Interacts (via olfactomedin-like domain) with FLRT1 (via extracellular domain). Interacts (via olfactomedin-like domain) with FLRT2 (via extracellular domain). Interacts (via olfactomedin-like domain) with FLRT3 (via extracellular domain); the interaction is direct. Interacts (via extracellular domain) with TENM1. Interacts (via extracellular domain) with TENM2. Interacts (via extracellular domain) with TENM3. Identified in a complex with FLRT3 and UNC5B; does not interact with UNC5B by itself. Identified in a complex with FLRT3 and UNC5D; does not interact with UNC5D by itself. In terms of assembly, interacts (via PDZ-binding motif) with SHANK3. Interacts (via PDZ-binding motif) with DLG4. In terms of processing, autoproteolytically processed at the GPS region of the GAIN-B domain; this cleavage modulates receptor activity.

The protein resides in the cell membrane. Its subcellular location is the postsynaptic cell membrane. It localises to the cell projection. It is found in the axon. The protein localises to the cell junction. Forms a heterodimer of 2 chains generated by proteolytic processing that remain associated through non-covalent interactions mediated by the GAIN-B domain. In the inactivated receptor, the Stachel sequence (also named stalk) is embedded in the GAIN-B domain, where it adopts a beta-strand conformation. On activation, the Stachel moves into the 7 transmembrane region and adopts a twisted hook-shaped configuration that forms contacts within the receptor, leading to coupling of a G-alpha protein, which activates signaling. The cleaved GAIN-B and N-terminal domains can then dissociate from the rest of the receptor. Its function is as follows. Orphan adhesion G-protein coupled receptor (aGPCR), which mediates synapse specificity. Ligand binding causes a conformation change that triggers signaling via guanine nucleotide-binding proteins (G proteins) and modulates the activity of downstream effectors. ADGRL3 is coupled with different classes of G alpha proteins, such as G(12)/G(13), G(s), G(i) or G(q), depending on the context. Coupling to G(12)/G(13) G proteins, which mediates the activation Rho small GTPases is the most efficient. Following G-protein coupled receptor activation, associates with cell adhesion molecules that are expressed at the surface of adjacent cells to direct synapse specificity. Specifically mediates the establishment of Schaffer-collateral synapses formed by CA3-region axons on CA1-region pyramidal neurons in the hippocampus. Localizes to postsynaptic spines in excitatory synapses in the S.oriens and S.radiatum and interacts with presynaptic cell adhesion molecules FLRT3 and TENM2, promoting synapse formation. Plays a role in the development of glutamatergic synapses in the cortex. Important in determining the connectivity rates between the principal neurons in the cortex. In terms of biological role, orphan adhesion G-protein coupled receptor (aGPCR), which mediates synapse specificity. Ligand binding causes a conformation change that triggers signaling via guanine nucleotide-binding proteins (G proteins) and modulates the activity of downstream effectors, such as adenylate cyclase. Isoform 1 is specifically coupled to G(s) G proteins and mediates activation of adenylate cyclase activity. Following G-protein coupled receptor activation, undergoes liquid-liquid phase transition, associates with (1) cell adhesion molecules that are expressed at the surface of adjacent cells, as well as (2) PDZ-containing proteins, such as SHANK3 and DLG4, in the cytoplasm to direct synapse formation. This chain is Adhesion G protein-coupled receptor L3, found in Homo sapiens (Human).